A 339-amino-acid polypeptide reads, in one-letter code: Uroporphyrinogen decarboxylase (339 aa).

Substrate-binding positions include 23 to 27 (RQAGR), aspartate 72, tyrosine 147, threonine 202, and histidine 315.

Belongs to the uroporphyrinogen decarboxylase family. In terms of assembly, homodimer.

It is found in the cytoplasm. The catalysed reaction is uroporphyrinogen III + 4 H(+) = coproporphyrinogen III + 4 CO2. Its pathway is porphyrin-containing compound metabolism; protoporphyrin-IX biosynthesis; coproporphyrinogen-III from 5-aminolevulinate: step 4/4. In terms of biological role, catalyzes the decarboxylation of four acetate groups of uroporphyrinogen-III to yield coproporphyrinogen-III. This chain is Uroporphyrinogen decarboxylase, found in Geotalea uraniireducens (strain Rf4) (Geobacter uraniireducens).